A 329-amino-acid chain; its full sequence is MAAMVDAKPAASVQGTPLLATATLPVFTRGIYSTKRITLETSSPSSPPPPKPLIIVTPAGKGTFNVILFLHGTSLSNKSYSKIFDHIASHGFIVVAPQLYTSIPPPSATNELNSAAEVAEWLPQGLQQNLPENTEANVSLVAVMGHSRGGQTAFALSLRYGFGAVIGLDPVAGTSKTTGLDPSILSFDSFDFSIPVTVIGTGLGGVARCITACAPEGANHEEFFNRCKNSSRAHFVATDYGHMDILDDNPSDVKSWALSKYFCKNGNESRDPMRRCVSGIVVAFLKDFFYGDAEDFRQILKDPSFAPIKLDSVEYIDASSMLTTTHVKV.

The transit peptide at M1 to T21 directs the protein to the chloroplast. The GXSXG signature appears at G145–G149. The active-site Nucleophile is the S147. Active-site charge relay system residues include D169 and H242.

Belongs to the AB hydrolase superfamily. Lipase family.

It is found in the plastid. The protein localises to the chloroplast. It carries out the reaction a chlorophyll + H2O = a chlorophyllide + phytol + H(+). The protein operates within porphyrin-containing compound metabolism; chlorophyll degradation. Functionally, catalyzes the hydrolysis of ester bond in chlorophyll to yield chlorophyllide and phytol. The protein is Chlorophyllase-1, chloroplastic (CHLASE1) of Citrus sinensis (Sweet orange).